A 622-amino-acid polypeptide reads, in one-letter code: Low affinity potassium transport system protein Kup (622 aa).

A run of 12 helical transmembrane segments spans residues 9 to 29 (LPAL…TSPL), 49 to 69 (VFGF…IKYI), 101 to 121 (VLVI…VITP), 137 to 157 (PQLD…LFVI), 163 to 183 (GMVG…LAVL), 213 to 233 (VSFI…ALYA), 247 to 267 (WFSV…ALLL), 276 to 296 (PFFL…ATLA), 337 to 357 (IYIP…IVSF), 363 to 383 (LAAA…ILSA), 395 to 415 (LFVG…FSAN), and 419 to 439 (IVSG…VMTT).

Belongs to the HAK/KUP transporter (TC 2.A.72) family.

The protein resides in the cell inner membrane. The enzyme catalyses K(+)(in) + H(+)(in) = K(+)(out) + H(+)(out). In terms of biological role, responsible for the low-affinity transport of potassium into the cell. Likely operates as a K(+):H(+) symporter. The sequence is that of Low affinity potassium transport system protein Kup from Klebsiella pneumoniae subsp. pneumoniae (strain ATCC 700721 / MGH 78578).